Here is an 861-residue protein sequence, read N- to C-terminus: Envelope glycoprotein gp160 (861 aa).

Positions 1 to 32 are cleaved as a signal peptide; that stretch reads MRVKEKYQHLWRWGWKWGTMLLGILMICSATE. Topologically, residues 33 to 689 are extracellular; sequence KLWVTVYYGV…ITNWLWYIKI (657 aa). An intrachain disulfide couples Cys54 to Cys74. 6 N-linked (GlcNAc...) asparagine; by host glycosylation sites follow: Asn88, Asn136, Asn141, Asn146, Asn161, and Asn165. 5 cysteine pairs are disulfide-bonded: Cys119–Cys210, Cys126–Cys201, Cys131–Cys162, Cys223–Cys252, and Cys233–Cys244. The interval 131-161 is V1; the sequence is CTDLGNATNTNSSNTNSSSGEMMMEKGEIKN. The tract at residues 162 to 201 is V2; the sequence is CSFNISTSIRGKVQKEYAFFYKLDIIPIDNDTTSYTLTSC. The short motif at 184–186 is the Putative binding site to alpha-4/beta-7 integrin element; sequence LDI. N-linked (GlcNAc...) asparagine; by host glycans are attached at residues Asn191, Asn202, Asn235, Asn239, Asn246, Asn267, Asn281, Asn294, Asn300, Asn306, Asn337, Asn344, and Asn361. The segment at 301-335 is V3; sequence CTRPNNNTRKSIRIQRGPGRAFVTIGKIGNMRQAH. A disulfide bond links Cys301 and Cys336. The interval 369-379 is CD4-binding loop; the sequence is SSGGDPEIVTH. Cystine bridges form between Cys383–Cys450 and Cys390–Cys423. The V4 stretch occupies residues 390-423; the sequence is CNSTQLFNSTWFNSTWSTEGSNNTEGSDTITLPC. 6 N-linked (GlcNAc...) asparagine; by host glycosylation sites follow: Asn391, Asn397, Asn402, Asn411, Asn453, and Asn468. 2 V5 regions span residues 466–476 and 468–476; these read NNNGSEIFRPG and NGSEIFRPG. Positions 517 to 537 are fusion peptide; the sequence is AVGIGALFLGFLGAAGSTMGA. Residues 579 to 597 form an immunosuppression region; the sequence is KQLQARILAVERYLKDQQL. Cys603 and Cys609 form a disulfide bridge. Residues Asn616, Asn621, Asn630, Asn642, and Asn679 are each glycosylated (N-linked (GlcNAc...) asparagine; by host). Residues 638-672 adopt a coiled-coil conformation; that stretch reads REINNYTSLIHSLIEESQNQQEKNEQELLELDKWA. Residues 667-688 are MPER; binding to GalCer; the sequence is ELDKWASLWNWFNITNWLWYIK. The chain crosses the membrane as a helical span at residues 690 to 710; the sequence is FIMIVGGLVGLRIVFAVLSIV. Residues 711-861 are Cytoplasmic-facing; it reads NRVRQGYSPL…IRQGLERILL (151 aa). The YXXL motif; contains endocytosis signal motif lies at 717-720; sequence YSPL. The tract at residues 723–747 is disordered; it reads QTHLPTPRGPDRPEGIEEEGGERDR. S-palmitoyl cysteine; by host attachment occurs at residues Cys769 and Cys842. Residues 860 to 861 carry the Di-leucine internalization motif motif; sequence LL.

This sequence belongs to the HIV-1 env protein family. As to quaternary structure, the mature envelope protein (Env) consists of a homotrimer of non-covalently associated gp120-gp41 heterodimers. The resulting complex protrudes from the virus surface as a spike. There seems to be as few as 10 spikes on the average virion. Interacts with host CD4, CCR5 and CXCR4. Gp120 also interacts with the C-type lectins CD209/DC-SIGN and CLEC4M/DC-SIGNR (collectively referred to as DC-SIGN(R)). Gp120 and gp41 interact with GalCer. Gp120 interacts with host ITGA4/ITGB7 complex; on CD4+ T-cells, this interaction results in rapid activation of integrin ITGAL/LFA-1, which facilitates efficient cell-to-cell spreading of HIV-1. Gp120 interacts with cell-associated heparan sulfate; this interaction increases virus infectivity on permissive cells and may be involved in infection of CD4- cells. The mature envelope protein (Env) consists of a homotrimer of non-covalently associated gp120-gp41 heterodimers. The resulting complex protrudes from the virus surface as a spike. There seems to be as few as 10 spikes on the average virion. Highly glycosylated by host. The high number of glycan on the protein is reffered to as 'glycan shield' because it contributes to hide protein sequence from adaptive immune system. Post-translationally, palmitoylation of the transmembrane protein and of Env polyprotein (prior to its proteolytic cleavage) is essential for their association with host cell membrane lipid rafts. Palmitoylation is therefore required for envelope trafficking to classical lipid rafts, but not for viral replication. In terms of processing, specific enzymatic cleavages in vivo yield mature proteins. Envelope glycoproteins are synthesized as an inactive precursor that is heavily N-glycosylated and processed likely by host cell furin in the Golgi to yield the mature SU and TM proteins. The cleavage site between SU and TM requires the minimal sequence [KR]-X-[KR]-R. About 2 of the 9 disulfide bonds of gp41 are reduced by P4HB/PDI, following binding to CD4 receptor.

Its subcellular location is the virion membrane. The protein localises to the host cell membrane. It localises to the host endosome membrane. Functionally, oligomerizes in the host endoplasmic reticulum into predominantly trimers. In a second time, gp160 transits in the host Golgi, where glycosylation is completed. The precursor is then proteolytically cleaved in the trans-Golgi and thereby activated by cellular furin or furin-like proteases to produce gp120 and gp41. In terms of biological role, attaches the virus to the host lymphoid cell by binding to the primary receptor CD4. This interaction induces a structural rearrangement creating a high affinity binding site for a chemokine coreceptor like CXCR4 and/or CCR5. Acts as a ligand for CD209/DC-SIGN and CLEC4M/DC-SIGNR, which are respectively found on dendritic cells (DCs), and on endothelial cells of liver sinusoids and lymph node sinuses. These interactions allow capture of viral particles at mucosal surfaces by these cells and subsequent transmission to permissive cells. HIV subverts the migration properties of dendritic cells to gain access to CD4+ T-cells in lymph nodes. Virus transmission to permissive T-cells occurs either in trans (without DCs infection, through viral capture and transmission), or in cis (following DCs productive infection, through the usual CD4-gp120 interaction), thereby inducing a robust infection. In trans infection, bound virions remain infectious over days and it is proposed that they are not degraded, but protected in non-lysosomal acidic organelles within the DCs close to the cell membrane thus contributing to the viral infectious potential during DCs' migration from the periphery to the lymphoid tissues. On arrival at lymphoid tissues, intact virions recycle back to DCs' cell surface allowing virus transmission to CD4+ T-cells. Its function is as follows. Acts as a class I viral fusion protein. Under the current model, the protein has at least 3 conformational states: pre-fusion native state, pre-hairpin intermediate state, and post-fusion hairpin state. During fusion of viral and target intracellular membranes, the coiled coil regions (heptad repeats) assume a trimer-of-hairpins structure, positioning the fusion peptide in close proximity to the C-terminal region of the ectodomain. The formation of this structure appears to drive apposition and subsequent fusion of viral and target cell membranes. Complete fusion occurs in host cell endosomes and is dynamin-dependent, however some lipid transfer might occur at the plasma membrane. The virus undergoes clathrin-dependent internalization long before endosomal fusion, thus minimizing the surface exposure of conserved viral epitopes during fusion and reducing the efficacy of inhibitors targeting these epitopes. Membranes fusion leads to delivery of the nucleocapsid into the cytoplasm. This is Envelope glycoprotein gp160 from Homo sapiens (Human).